We begin with the raw amino-acid sequence, 559 residues long: 2,3-bisphosphoglycerate-independent phosphoglycerate mutase (559 aa).

Mn(2+) is bound by residues D28 and S81. S81 functions as the Phosphoserine intermediate in the catalytic mechanism. Residues H140, 170–171 (RD), R206, R213, 286–289 (RADR), and K361 each bind substrate. The Mn(2+) site is built by D430, H434, D471, H472, and H501.

Belongs to the BPG-independent phosphoglycerate mutase family. As to quaternary structure, monomer. Mn(2+) is required as a cofactor. Post-translationally, the N-terminus is blocked. Found ubiquitously in germinating seed.

It is found in the cytoplasm. It carries out the reaction (2R)-2-phosphoglycerate = (2R)-3-phosphoglycerate. It participates in carbohydrate degradation; glycolysis; pyruvate from D-glyceraldehyde 3-phosphate: step 3/5. Its function is as follows. Catalyzes the interconversion of 2-phosphoglycerate and 3-phosphoglycerate. The protein is 2,3-bisphosphoglycerate-independent phosphoglycerate mutase of Zea mays (Maize).